The following is a 1252-amino-acid chain: DNA-directed RNA polymerase subunit beta (1252 aa).

This sequence belongs to the RNA polymerase beta chain family. As to quaternary structure, the RNAP catalytic core consists of 2 alpha, 1 beta, 1 beta' and 1 omega subunit. When a sigma factor is associated with the core the holoenzyme is formed, which can initiate transcription.

It carries out the reaction RNA(n) + a ribonucleoside 5'-triphosphate = RNA(n+1) + diphosphate. Its function is as follows. DNA-dependent RNA polymerase catalyzes the transcription of DNA into RNA using the four ribonucleoside triphosphates as substrates. This is DNA-directed RNA polymerase subunit beta from Chlamydia muridarum (strain MoPn / Nigg).